A 97-amino-acid chain; its full sequence is Co-chaperonin GroES (97 aa).

Belongs to the GroES chaperonin family. Heptamer of 7 subunits arranged in a ring. Interacts with the chaperonin GroEL.

The protein localises to the cytoplasm. In terms of biological role, together with the chaperonin GroEL, plays an essential role in assisting protein folding. The GroEL-GroES system forms a nano-cage that allows encapsulation of the non-native substrate proteins and provides a physical environment optimized to promote and accelerate protein folding. GroES binds to the apical surface of the GroEL ring, thereby capping the opening of the GroEL channel. The chain is Co-chaperonin GroES from Yersinia enterocolitica.